The sequence spans 203 residues: A-type ATP synthase subunit E (203 aa).

The protein belongs to the V-ATPase E subunit family. In terms of assembly, has multiple subunits with at least A(3), B(3), C, D, E, F, H, I and proteolipid K(x).

It localises to the cell membrane. Functionally, component of the A-type ATP synthase that produces ATP from ADP in the presence of a proton gradient across the membrane. The polypeptide is A-type ATP synthase subunit E (Methanococcus vannielii (strain ATCC 35089 / DSM 1224 / JCM 13029 / OCM 148 / SB)).